The following is a 156-amino-acid chain: Small ribosomal subunit protein uS7 (156 aa).

Belongs to the universal ribosomal protein uS7 family. In terms of assembly, part of the 30S ribosomal subunit. Contacts proteins S9 and S11.

One of the primary rRNA binding proteins, it binds directly to 16S rRNA where it nucleates assembly of the head domain of the 30S subunit. Is located at the subunit interface close to the decoding center, probably blocks exit of the E-site tRNA. The chain is Small ribosomal subunit protein uS7 from Paenarthrobacter aurescens (strain TC1).